The chain runs to 123 residues: Small ribosomal subunit protein uS12cz/uS12cy (123 aa).

It belongs to the universal ribosomal protein uS12 family. As to quaternary structure, part of the 30S ribosomal subunit.

The protein resides in the plastid. The protein localises to the chloroplast. In terms of biological role, with S4 and S5 plays an important role in translational accuracy. Located at the interface of the 30S and 50S subunits. The chain is Small ribosomal subunit protein uS12cz/uS12cy (rps12-A) from Atropa belladonna (Belladonna).